The chain runs to 122 residues: Large ribosomal subunit protein uL14 (122 aa).

It belongs to the universal ribosomal protein uL14 family. In terms of assembly, part of the 50S ribosomal subunit. Forms a cluster with proteins L3 and L19. In the 70S ribosome, L14 and L19 interact and together make contacts with the 16S rRNA in bridges B5 and B8.

In terms of biological role, binds to 23S rRNA. Forms part of two intersubunit bridges in the 70S ribosome. The sequence is that of Large ribosomal subunit protein uL14 from Nitrobacter winogradskyi (strain ATCC 25391 / DSM 10237 / CIP 104748 / NCIMB 11846 / Nb-255).